A 193-amino-acid chain; its full sequence is ATP-dependent Clp protease proteolytic subunit (193 aa).

Serine 98 (nucleophile) is an active-site residue. The active site involves histidine 123.

It belongs to the peptidase S14 family. Fourteen ClpP subunits assemble into 2 heptameric rings which stack back to back to give a disk-like structure with a central cavity, resembling the structure of eukaryotic proteasomes.

The protein resides in the cytoplasm. It catalyses the reaction Hydrolysis of proteins to small peptides in the presence of ATP and magnesium. alpha-casein is the usual test substrate. In the absence of ATP, only oligopeptides shorter than five residues are hydrolyzed (such as succinyl-Leu-Tyr-|-NHMec, and Leu-Tyr-Leu-|-Tyr-Trp, in which cleavage of the -Tyr-|-Leu- and -Tyr-|-Trp bonds also occurs).. In terms of biological role, cleaves peptides in various proteins in a process that requires ATP hydrolysis. Has a chymotrypsin-like activity. Plays a major role in the degradation of misfolded proteins. ClpXP is involved in the complete degradation of the Site-2 clipped anti-sigma-W factor RsiW. This results in the release of SigW and the transcription activation of the genes under the control of the sigma-W factor. This Oceanobacillus iheyensis (strain DSM 14371 / CIP 107618 / JCM 11309 / KCTC 3954 / HTE831) protein is ATP-dependent Clp protease proteolytic subunit.